The primary structure comprises 434 residues: ATP-dependent protease ATPase subunit HslU (434 aa).

Residues Ile18, 60–65, Asp247, Glu312, and Arg384 each bind ATP; that span reads GVGKTE.

The protein belongs to the ClpX chaperone family. HslU subfamily. In terms of assembly, a double ring-shaped homohexamer of HslV is capped on each side by a ring-shaped HslU homohexamer. The assembly of the HslU/HslV complex is dependent on binding of ATP.

Its subcellular location is the cytoplasm. Its function is as follows. ATPase subunit of a proteasome-like degradation complex; this subunit has chaperone activity. The binding of ATP and its subsequent hydrolysis by HslU are essential for unfolding of protein substrates subsequently hydrolyzed by HslV. HslU recognizes the N-terminal part of its protein substrates and unfolds these before they are guided to HslV for hydrolysis. In Brucella melitensis biotype 2 (strain ATCC 23457), this protein is ATP-dependent protease ATPase subunit HslU.